We begin with the raw amino-acid sequence, 500 residues long: Serine carboxypeptidase 3 (500 aa).

The first 21 residues, 1–21 (MATARVSLILLVVVLAASACA), serve as a signal peptide directing secretion. Residues 22-73 (EGLRLPRDAKFPAAQAERLIRSLNLLPKEAGPTGAGDVPSVAPGELLERRVT) constitute a propeptide that is removed on maturation. 3 disulfide bridges follow: Cys-126-Cys-366, Cys-294-Cys-309, and Cys-332-Cys-337. Residue Asn-144 is glycosylated (N-linked (GlcNAc...) asparagine). The active site involves Ser-216. Asp-404 is a catalytic residue. Cys-407 provides a ligand contact to substrate. The active site involves His-461. The propeptide occupies 485–500 (EEWLAELPEQPMYAAM).

This sequence belongs to the peptidase S10 family. Monomer.

It catalyses the reaction Release of a C-terminal amino acid with broad specificity.. The sequence is that of Serine carboxypeptidase 3 (CBP3) from Oryza sativa subsp. japonica (Rice).